We begin with the raw amino-acid sequence, 37 residues long: Large ribosomal subunit protein bL36 (37 aa).

It belongs to the bacterial ribosomal protein bL36 family.

In Photobacterium profundum (strain SS9), this protein is Large ribosomal subunit protein bL36.